A 347-amino-acid chain; its full sequence is Integrin beta-1-binding protein 2 (347 aa).

4 residues coordinate Zn(2+): Cys-5, Cys-10, Cys-24, and His-27. One can recognise a CHORD 1 domain in the interval 5–64; that stretch reads CRNKGCGQHFDPNTNLPDSCCHHPGVPIFHDALKGWSCCRKRTVDFSEFLNIKGCTMGPH. An SH3-binding motif is present at residues 28-31; the sequence is PGVP. The Zn(2+) site is built by Cys-42, Cys-43, Cys-59, and His-64. Positions 70 to 78 match the SH3-binding motif; that stretch reads PEAPQPEGP. Positions 149 and 154 each coordinate Zn(2+). The region spanning 149–208 is the CHORD 2 domain; the sequence is CQNPGCDAVYQGPESDATPCTYHPGAPRFHEGMKSWSCCGIQTLDFGAFLAQPGCRVGRH. Positions 158–161 match the SH2-binding motif; sequence YQGP. Zn(2+)-binding residues include Cys-168 and His-171. The SH3-binding signature appears at 172 to 175; the sequence is PGAP. Zn(2+)-binding residues include Cys-186, Cys-187, Cys-203, and His-208. One can recognise a CS domain in the interval 215–304; that stretch reads PASCRHDWHQ…ADPGSWAQLE (90 aa). The short motif at 234–237 is the SH2-binding element; the sequence is YGQI. The tract at residues 319–347 is disordered; that stretch reads LEMDEEESDDSDDDLSWTEEEEEEEAMGE. The segment covering 320 to 347 has biased composition (acidic residues); the sequence is EMDEEESDDSDDDLSWTEEEEEEEAMGE.

As to quaternary structure, interacts with beta-1 integrin subunit. This interaction is regulated by divalent cations, and it occurs only in absence of calcium. As to expression, expressed in skeletal and cardiac muscles but not in other tissues.

Its function is as follows. May play a role during maturation and/or organization of muscles cells. This chain is Integrin beta-1-binding protein 2 (ITGB1BP2), found in Homo sapiens (Human).